Consider the following 270-residue polypeptide: Beta carbonic anhydrase 1 (270 aa).

Positions 39, 41, 105, and 108 each coordinate Zn(2+).

This sequence belongs to the beta-class carbonic anhydrase family. Oligomer. Requires Zn(2+) as cofactor.

The catalysed reaction is hydrogencarbonate + H(+) = CO2 + H2O. Its function is as follows. Reversible hydration of carbon dioxide. The polypeptide is Beta carbonic anhydrase 1 (bca-1) (Caenorhabditis elegans).